Here is a 501-residue protein sequence, read N- to C-terminus: Pre-mRNA-splicing factor 38B (501 aa).

Residues 1–11 (MAGSQQQQQQQ) are compositionally biased toward low complexity. 2 disordered regions span residues 1–28 (MAGS…LPLW) and 208–501 (DQHM…ADSP). The segment covering 243-273 (GDKRRSRTPRRSPSPRKSQNRSRSRSHHRER) has biased composition (basic residues). Positions 281 to 302 (ELERERDRQRKEREGKDRDRDR) form a coiled coil. The span at 281–328 (ELERERDRQRKEREGKDRDRDRDRDRERDRERDRDRRRSRTPDRNAER) shows a compositional bias: basic and acidic residues. The segment covering 329–341 (RRSRSRERRRSRS) has biased composition (basic residues). Basic and acidic residues predominate over residues 342 to 408 (TSRDKRTERK…EEKKHREEKR (67 aa)). Basic residues predominate over residues 409–435 (SKRSRSRSRDRKHKAERSSKKRSRSGS). The span at 437–447 (SRQEAGEEKNR) shows a compositional bias: basic and acidic residues. The segment covering 448–468 (KRERSHSKDRQHKRSRSKERS) has biased composition (basic residues). Residues 469–491 (HRRESSNERIHARQERPSSESGE) are compositionally biased toward basic and acidic residues. Residues 492 to 501 (RTNSVRADSP) are compositionally biased toward polar residues.

Belongs to the PRP38 family.

It is found in the nucleus. In terms of biological role, may be required for pre-mRNA splicing. The sequence is that of Pre-mRNA-splicing factor 38B (prpf38b) from Danio rerio (Zebrafish).